The chain runs to 637 residues: Glutamate--cysteine ligase catalytic subunit (637 aa).

Position 1 is an N-acetylmethionine (methionine 1). Phosphoserine occurs at positions 5 and 8.

The protein belongs to the glutamate--cysteine ligase type 3 family. In terms of assembly, heterodimer of a catalytic heavy chain and a regulatory light chain.

The catalysed reaction is L-cysteine + L-glutamate + ATP = gamma-L-glutamyl-L-cysteine + ADP + phosphate + H(+). It carries out the reaction (2S)-2-aminobutanoate + L-glutamate + ATP = gamma-L-glutamyl-(2S)-2-aminobutanoate + ADP + phosphate + H(+). It participates in sulfur metabolism; glutathione biosynthesis; glutathione from L-cysteine and L-glutamate: step 1/2. Feedback inhibition by glutathione. Functionally, catalyzes the ATP-dependent ligation of L-glutamate and L-cysteine and participates in the first and rate-limiting step in glutathione biosynthesis. The chain is Glutamate--cysteine ligase catalytic subunit from Mus musculus (Mouse).